Consider the following 394-residue polypeptide: MAKAKFERNKPHVNVGTIGHVDHGKTTLTAAISHVLAKTYGGEAKDFSQIDNAPEERERGITINTSHIEYDTPTRHYAHVDCPGHADYVKNMITGAAQMDGAILVVASTDGPMPQTREHILLSRQVGVPFIIVFMNKCDMVDDAELLELVEMEVRELLSEYDFPGDDLPVIQGSALKALEGEPEWEAKIIELAEALDSYIPEPERDIDKPFLMPIEDVFSISGRGTVVTGRVERGIVRVGDEVEIVGIRATTKTTCTGVEMFRKLLDEGRAGENCGILLRGTKRDDVERGQVLSKPGSINPHTTFESEVYVLSKEEGGRHTPFFKGYRPQFYFRTTDVTGTIELPEGVEMVMPGDNIKMKVTLICPIAMDEGLRFAIREGGRTVGAGVVAKIFA.

In terms of domain architecture, tr-type G spans 10–204; sequence KPHVNVGTIG…ALDSYIPEPE (195 aa). Residues 19–26 form a G1 region; sequence GHVDHGKT. Residue 19–26 participates in GTP binding; it reads GHVDHGKT. Thr-26 provides a ligand contact to Mg(2+). Residues 60 to 64 are G2; it reads GITIN. The G3 stretch occupies residues 81–84; it reads DCPG. Residues 81–85 and 136–139 contribute to the GTP site; these read DCPGH and NKCD. Residues 136–139 form a G4 region; the sequence is NKCD. The G5 stretch occupies residues 174–176; the sequence is SAL.

It belongs to the TRAFAC class translation factor GTPase superfamily. Classic translation factor GTPase family. EF-Tu/EF-1A subfamily. In terms of assembly, monomer.

The protein localises to the cytoplasm. It catalyses the reaction GTP + H2O = GDP + phosphate + H(+). GTP hydrolase that promotes the GTP-dependent binding of aminoacyl-tRNA to the A-site of ribosomes during protein biosynthesis. The polypeptide is Elongation factor Tu 1 (Shewanella sp. (strain MR-4)).